A 339-amino-acid chain; its full sequence is 4-hydroxythreonine-4-phosphate dehydrogenase (339 aa).

Substrate is bound by residues His141 and Thr142. A divalent metal cation-binding residues include His171, His215, and His270. Positions 278, 287, and 296 each coordinate substrate.

Belongs to the PdxA family. As to quaternary structure, homodimer. It depends on Zn(2+) as a cofactor. Mg(2+) is required as a cofactor. The cofactor is Co(2+).

Its subcellular location is the cytoplasm. It catalyses the reaction 4-(phosphooxy)-L-threonine + NAD(+) = 3-amino-2-oxopropyl phosphate + CO2 + NADH. It participates in cofactor biosynthesis; pyridoxine 5'-phosphate biosynthesis; pyridoxine 5'-phosphate from D-erythrose 4-phosphate: step 4/5. Its function is as follows. Catalyzes the NAD(P)-dependent oxidation of 4-(phosphooxy)-L-threonine (HTP) into 2-amino-3-oxo-4-(phosphooxy)butyric acid which spontaneously decarboxylates to form 3-amino-2-oxopropyl phosphate (AHAP). The chain is 4-hydroxythreonine-4-phosphate dehydrogenase from Geobacter metallireducens (strain ATCC 53774 / DSM 7210 / GS-15).